We begin with the raw amino-acid sequence, 436 residues long: Xylose isomerase (436 aa).

Residues histidine 100 and aspartate 103 contribute to the active site. Residues glutamate 231, glutamate 267, histidine 270, aspartate 295, aspartate 306, aspartate 308, and aspartate 338 each contribute to the Mg(2+) site.

This sequence belongs to the xylose isomerase family. As to quaternary structure, homotetramer. It depends on Mg(2+) as a cofactor.

The protein localises to the cytoplasm. The catalysed reaction is alpha-D-xylose = alpha-D-xylulofuranose. The sequence is that of Xylose isomerase from Ruegeria sp. (strain TM1040) (Silicibacter sp.).